The following is a 234-amino-acid chain: Orotidine 5'-phosphate decarboxylase (234 aa).

Substrate contacts are provided by residues Asp-14, Lys-36, 63-72 (DLKFHDIPNT), Thr-123, Arg-184, Gln-193, Gly-213, and Arg-214. The active-site Proton donor is the Lys-65.

Belongs to the OMP decarboxylase family. Type 1 subfamily. As to quaternary structure, homodimer.

It carries out the reaction orotidine 5'-phosphate + H(+) = UMP + CO2. The protein operates within pyrimidine metabolism; UMP biosynthesis via de novo pathway; UMP from orotate: step 2/2. Its function is as follows. Catalyzes the decarboxylation of orotidine 5'-monophosphate (OMP) to uridine 5'-monophosphate (UMP). The sequence is that of Orotidine 5'-phosphate decarboxylase from Pseudoalteromonas translucida (strain TAC 125).